The primary structure comprises 441 residues: GPI mannosyltransferase 2 (441 aa).

Helical transmembrane passes span methionine 4–valine 24, isoleucine 35–glycine 55, leucine 115–glycine 135, leucine 143–proline 163, glycine 165–leucine 185, leucine 199–phenylalanine 223, valine 249–phenylalanine 269, tyrosine 306–leucine 326, leucine 361–isoleucine 381, and valine 418–leucine 438.

This sequence belongs to the PIGV family.

Its subcellular location is the endoplasmic reticulum membrane. It participates in glycolipid biosynthesis; glycosylphosphatidylinositol-anchor biosynthesis. Functionally, mannosyltransferase involved in glycosylphosphatidylinositol-anchor biosynthesis. Transfers the second mannose to the glycosylphosphatidylinositol during GPI precursor assembly. The chain is GPI mannosyltransferase 2 (gpi18) from Aspergillus fumigatus (strain ATCC MYA-4609 / CBS 101355 / FGSC A1100 / Af293) (Neosartorya fumigata).